The following is a 154-amino-acid chain: MGLSDGEWQLVLNVWGKVEADLAGHGQEVLIRLFKGHPETLEKFDKFKHLKSEDEMKGSEDLKKHGNTVLTALGGILKKKGHQEAELKPLAQSHATKHKIPVKYLEFISDAIAQVLQSKHPGNFAAEAQGAMKKALELFRNDIAAKYKELGFQG.

In terms of domain architecture, Globin spans Gly-2–Lys-148. Phosphoserine is present on Ser-4. His-65 serves as a coordination point for nitrite. Residue His-65 participates in O2 binding. Thr-68 bears the Phosphothreonine mark. His-94 contacts heme b.

It belongs to the globin family. Monomeric.

It localises to the cytoplasm. Its subcellular location is the sarcoplasm. The enzyme catalyses Fe(III)-heme b-[protein] + nitric oxide + H2O = Fe(II)-heme b-[protein] + nitrite + 2 H(+). It carries out the reaction H2O2 + AH2 = A + 2 H2O. Functionally, monomeric heme protein which primary function is to store oxygen and facilitate its diffusion within muscle tissues. Reversibly binds oxygen through a pentacoordinated heme iron and enables its timely and efficient release as needed during periods of heightened demand. Depending on the oxidative conditions of tissues and cells, and in addition to its ability to bind oxygen, it also has a nitrite reductase activity whereby it regulates the production of bioactive nitric oxide. Under stress conditions, like hypoxia and anoxia, it also protects cells against reactive oxygen species thanks to its pseudoperoxidase activity. This is Myoglobin (MB) from Meles meles (Eurasian badger).